We begin with the raw amino-acid sequence, 506 residues long: Gamma-aminobutyric acid receptor subunit epsilon (506 aa).

Positions methionine 1–glutamine 17 are cleaved as a signal peptide. Topologically, residues tryptophan 18–arginine 277 are extracellular. The disordered stretch occupies residues alanine 32 to proline 65. Residues proline 50 to proline 65 are compositionally biased toward basic and acidic residues. Asparagine 135 carries N-linked (GlcNAc...) asparagine glycosylation. The cysteines at positions 196 and 210 are disulfide-linked. Asparagine 253 carries an N-linked (GlcNAc...) asparagine glycan. Residues phenylalanine 278–valine 298 form a helical membrane-spanning segment. Over serine 299–alanine 308 the chain is Cytoplasmic. Residues alanine 309–serine 328 form a helical membrane-spanning segment. The Extracellular portion of the chain corresponds to arginine 329–tyrosine 344. A helical transmembrane segment spans residues isoleucine 345–leucine 365. Residues threonine 366–arginine 485 are Cytoplasmic-facing. Residues valine 486–leucine 506 traverse the membrane as a helical segment.

This sequence belongs to the ligand-gated ion channel (TC 1.A.9) family. Gamma-aminobutyric acid receptor (TC 1.A.9.5) subfamily. GABRE sub-subfamily. Heteropentamer, formed by a combination of alpha (GABRA1-6), beta (GABRB1-3), gamma (GABRG1-3), delta (GABRD), epsilon (GABRE), rho (GABRR1-3), pi (GABRP) and theta (GABRQ) chains, each subunit exhibiting distinct physiological and pharmacological properties. As to expression, expressed in brain and heart. Strongly expressed in locus ceruleus from the first postnatal day. Weakly expressed in other brainstem nuclei and in the hypothalamus. Found in the cerebral cortex of pups.

The protein localises to the cell membrane. The protein resides in the postsynaptic cell membrane. The catalysed reaction is chloride(in) = chloride(out). Its function is as follows. Epsilon subunit of the heteropentameric ligand-gated chloride channel gated by gamma-aminobutyric acid (GABA), a major inhibitory neurotransmitter in the brain. GABA-gated chloride channels, also named GABA(A) receptors (GABAAR), consist of five subunits arranged around a central pore and contain GABA active binding site(s) located at the alpha and beta subunit interfaces. When activated by GABA, GABAARs selectively allow the flow of chloride anions across the cell membrane down their electrochemical gradient. GABARs containing epsilon subunit may also permit spontaneous chloride channel activity while preserving the structural information required for GABA-gated openings. GABARs containing epsilon subunit may regulate cardiac function. This is Gamma-aminobutyric acid receptor subunit epsilon from Rattus norvegicus (Rat).